We begin with the raw amino-acid sequence, 353 residues long: Photosystem II protein D1 (353 aa).

Residue Thr2 is modified to N-acetylthreonine. The residue at position 2 (Thr2) is a Phosphothreonine. 3 helical membrane-spanning segments follow: residues 29 to 46, 118 to 133, and 142 to 156; these read YIGWFGVLMIPTLLTATS, HFLLGVACYMGREWEL, and WIAVAYSAPVAAATA. A chlorophyll a-binding site is contributed by His118. Residue Tyr126 coordinates pheophytin a. [CaMn4O5] cluster contacts are provided by Asp170 and Glu189. A helical membrane pass occupies residues 197–218; sequence FHMLGVAGVFGGSLFSAMHGSL. His198 lines the chlorophyll a pocket. Residues His215 and 264–265 contribute to the a quinone site; that span reads SF. His215 lines the Fe cation pocket. Fe cation is bound at residue His272. Residues 274 to 288 traverse the membrane as a helical segment; it reads FLAAWPVAGIWFTAL. Positions 332, 333, 342, and 344 each coordinate [CaMn4O5] cluster. The propeptide occupies 345–353; that stretch reads AVESISIGG.

This sequence belongs to the reaction center PufL/M/PsbA/D family. PSII is composed of 1 copy each of membrane proteins PsbA, PsbB, PsbC, PsbD, PsbE, PsbF, PsbH, PsbI, PsbJ, PsbK, PsbL, PsbM, PsbT, PsbX, PsbY, PsbZ, Psb30/Ycf12, at least 3 peripheral proteins of the oxygen-evolving complex and a large number of cofactors. It forms dimeric complexes. The D1/D2 heterodimer binds P680, chlorophylls that are the primary electron donor of PSII, and subsequent electron acceptors. It shares a non-heme iron and each subunit binds pheophytin, quinone, additional chlorophylls, carotenoids and lipids. D1 provides most of the ligands for the Mn4-Ca-O5 cluster of the oxygen-evolving complex (OEC). There is also a Cl(-1) ion associated with D1 and D2, which is required for oxygen evolution. The PSII complex binds additional chlorophylls, carotenoids and specific lipids. serves as cofactor. Post-translationally, tyr-161 forms a radical intermediate that is referred to as redox-active TyrZ, YZ or Y-Z. In terms of processing, C-terminally processed by CTPA; processing is essential to allow assembly of the oxygen-evolving complex and thus photosynthetic growth.

It is found in the plastid. The protein resides in the chloroplast thylakoid membrane. It catalyses the reaction 2 a plastoquinone + 4 hnu + 2 H2O = 2 a plastoquinol + O2. Functionally, photosystem II (PSII) is a light-driven water:plastoquinone oxidoreductase that uses light energy to abstract electrons from H(2)O, generating O(2) and a proton gradient subsequently used for ATP formation. It consists of a core antenna complex that captures photons, and an electron transfer chain that converts photonic excitation into a charge separation. The D1/D2 (PsbA/PsbD) reaction center heterodimer binds P680, the primary electron donor of PSII as well as several subsequent electron acceptors. The polypeptide is Photosystem II protein D1 (Pinus contorta (Shore pine)).